Here is a 337-residue protein sequence, read N- to C-terminus: Protein SphX (337 aa).

An N-terminal signal peptide occupies residues 1-30; the sequence is MTTLKPALRRAAVLLPIAAVASSLFPIQEA.

Belongs to the PstS family. The N-terminus is blocked.

The protein resides in the cell inner membrane. In terms of biological role, may be involved in the system for phosphate transport across the cytoplasmic membrane. The chain is Protein SphX (sphX) from Synechococcus elongatus (strain ATCC 33912 / PCC 7942 / FACHB-805) (Anacystis nidulans R2).